Here is a 185-residue protein sequence, read N- to C-terminus: Elongation factor P (185 aa).

The protein belongs to the elongation factor P family.

The protein resides in the cytoplasm. It participates in protein biosynthesis; polypeptide chain elongation. In terms of biological role, involved in peptide bond synthesis. Stimulates efficient translation and peptide-bond synthesis on native or reconstituted 70S ribosomes in vitro. Probably functions indirectly by altering the affinity of the ribosome for aminoacyl-tRNA, thus increasing their reactivity as acceptors for peptidyl transferase. The protein is Elongation factor P of Paraburkholderia phymatum (strain DSM 17167 / CIP 108236 / LMG 21445 / STM815) (Burkholderia phymatum).